A 445-amino-acid polypeptide reads, in one-letter code: 23S rRNA (uracil(1939)-C(5))-methyltransferase RlmD (445 aa).

The TRAM domain maps to 12 to 70 (SKQLSSKLSLKVTQLDHLGAGIAHHDGKIVFINGALPGETVSVQLTEQKKKFARAKLLK). Residues Cys83, Cys89, Cys92, and Cys171 each contribute to the [4Fe-4S] cluster site. Positions 278, 307, 312, 328, 355, and 375 each coordinate S-adenosyl-L-methionine. Cys401 (nucleophile) is an active-site residue.

Belongs to the class I-like SAM-binding methyltransferase superfamily. RNA M5U methyltransferase family. RlmD subfamily.

It carries out the reaction uridine(1939) in 23S rRNA + S-adenosyl-L-methionine = 5-methyluridine(1939) in 23S rRNA + S-adenosyl-L-homocysteine + H(+). In terms of biological role, catalyzes the formation of 5-methyl-uridine at position 1939 (m5U1939) in 23S rRNA. In Shewanella halifaxensis (strain HAW-EB4), this protein is 23S rRNA (uracil(1939)-C(5))-methyltransferase RlmD.